A 35-amino-acid polypeptide reads, in one-letter code: Dermonecrotic toxin LgSicTox-beta-LOXN4 (35 aa).

Position 20 (Asp-20) interacts with Mg(2+).

The protein belongs to the arthropod phospholipase D family. Class II subfamily. Mg(2+) serves as cofactor. Contains 2 disulfide bonds. In terms of tissue distribution, expressed by the venom gland.

The protein localises to the secreted. It catalyses the reaction an N-(acyl)-sphingosylphosphocholine = an N-(acyl)-sphingosyl-1,3-cyclic phosphate + choline. The catalysed reaction is an N-(acyl)-sphingosylphosphoethanolamine = an N-(acyl)-sphingosyl-1,3-cyclic phosphate + ethanolamine. It carries out the reaction a 1-acyl-sn-glycero-3-phosphocholine = a 1-acyl-sn-glycero-2,3-cyclic phosphate + choline. The enzyme catalyses a 1-acyl-sn-glycero-3-phosphoethanolamine = a 1-acyl-sn-glycero-2,3-cyclic phosphate + ethanolamine. Dermonecrotic toxins cleave the phosphodiester linkage between the phosphate and headgroup of certain phospholipids (sphingolipid and lysolipid substrates), forming an alcohol (often choline) and a cyclic phosphate. This toxin acts on sphingomyelin (SM). It may also act on ceramide phosphoethanolamine (CPE), lysophosphatidylcholine (LPC) and lysophosphatidylethanolamine (LPE), but not on lysophosphatidylserine (LPS), and lysophosphatidylglycerol (LPG). It acts by transphosphatidylation, releasing exclusively cyclic phosphate products as second products. Induces dermonecrosis, hemolysis, increased vascular permeability, edema, inflammatory response, and platelet aggregation. This Loxosceles gaucho (Spider) protein is Dermonecrotic toxin LgSicTox-beta-LOXN4.